The following is a 160-amino-acid chain: Small ribosomal subunit protein uS7 (160 aa).

The protein belongs to the universal ribosomal protein uS7 family. As to quaternary structure, part of the 30S ribosomal subunit. Contacts proteins S9 and S11.

In terms of biological role, one of the primary rRNA binding proteins, it binds directly to 16S rRNA where it nucleates assembly of the head domain of the 30S subunit. Is located at the subunit interface close to the decoding center, probably blocks exit of the E-site tRNA. The protein is Small ribosomal subunit protein uS7 of Rickettsia massiliae (strain Mtu5).